A 247-amino-acid polypeptide reads, in one-letter code: Small ribosomal subunit protein uS3 (247 aa).

The region spanning 39-107 (VRDYLRKKLD…PAQVNIEEIT (69 aa)) is the KH type-2 domain. Residues 213–247 (SVYNPPKEDKTRAPKRRGRSNSNRRNSDRANTDRG) form a disordered region. Over residues 237-247 (RNSDRANTDRG) the composition is skewed to basic and acidic residues.

Belongs to the universal ribosomal protein uS3 family. In terms of assembly, part of the 30S ribosomal subunit. Forms a tight complex with proteins S10 and S14.

In terms of biological role, binds the lower part of the 30S subunit head. Binds mRNA in the 70S ribosome, positioning it for translation. The sequence is that of Small ribosomal subunit protein uS3 from Psychrobacter sp. (strain PRwf-1).